Consider the following 559-residue polypeptide: uncharacterized protein (559 aa).

Disordered regions lie at residues 315-360 (TDDA…ERDI) and 454-559 (DKID…STEN). Polar residues predominate over residues 320–329 (NENSDNSMNT). The segment covering 348–357 (DNNDDSDDSE) has biased composition (acidic residues). A coiled-coil region spans residues 433 to 495 (ELKIQEMEKI…KRRQKRSQRS (63 aa)). The span at 454-501 (DKIDMDQIKSEMSRRRDESNKRRDEKRKDREEKRRQKRSQRSDTRKQG) shows a compositional bias: basic and acidic residues. The segment covering 507 to 527 (SDEATSDQTQSTDSNNTTQTA) has biased composition (low complexity).

It localises to the virion. This is an uncharacterized protein from Acanthamoeba polyphaga mimivirus (APMV).